A 321-amino-acid polypeptide reads, in one-letter code: Calcium-binding protein LPS1-alpha (321 aa).

EF-hand domains follow at residues 15-49, 47-82, 85-120, 121-156, 165-200, 200-233, 232-267, and 269-304; these read DAIE…NWTE, WTEE…STKE, YSSD…IYTK, VVDG…KLPI, EYRE…STKY, YSDK…DGVS, VSKD…IYRQ, and VDFE…NCPY. Ca(2+) contacts are provided by D29, N31, D33, T35, E40, D60, N62, D64, H66, E71, D98, D100, N102, R104, E109, D134, D136, D138, H140, E145, D178, N180, D182, S184, E189, D213, N215, D217, R219, E224, D245, D247, N249, K251, E256, D284, D286, Y288, and E293.

As to expression, aboral ectoderm, a squamous epithelium covering the surface of the late stage embryo and larva.

Its function is as follows. Calcium-binding protein involved in larval development and metamorphosis. Likely to function as calcium buffers mediating the transport of calcium from the sea water to the blastocoel where calcium is required for skeleton formation. This chain is Calcium-binding protein LPS1-alpha, found in Lytechinus pictus (Painted sea urchin).